The chain runs to 117 residues: Fluoride-specific ion channel FluC 1 (117 aa).

Helical transmembrane passes span 1–21 (MIHI…RAWL), 35–55 (IATL…YGIA), 60–80 (LFSL…STLS), and 97–117 (FSYS…GYSI). Residues Gly-71 and Thr-74 each coordinate Na(+).

Belongs to the fluoride channel Fluc/FEX (TC 1.A.43) family.

The protein resides in the cell membrane. It carries out the reaction fluoride(in) = fluoride(out). With respect to regulation, na(+) is not transported, but it plays an essential structural role and its presence is essential for fluoride channel function. Fluoride-specific ion channel. Important for reducing fluoride concentration in the cell, thus reducing its toxicity. In Staphylococcus haemolyticus (strain JCSC1435), this protein is Fluoride-specific ion channel FluC 1.